The following is a 255-amino-acid chain: Small ribosomal subunit protein eS1A (255 aa).

Residues 1–18 show a composition bias toward basic residues; the sequence is MAVGKNKRLSKGKKGQKK. A disordered region spans residues 1 to 20; sequence MAVGKNKRLSKGKKGQKKRV. Alanine 2 bears the N-acetylalanine; partial mark. Position 245 is a phosphothreonine (threonine 245). Residue lysine 248 forms a Glycyl lysine isopeptide (Lys-Gly) (interchain with G-Cter in ubiquitin) linkage. Residue threonine 254 is modified to Phosphothreonine.

Belongs to the eukaryotic ribosomal protein eS1 family. In terms of assembly, component of the small ribosomal subunit. Mature ribosomes consist of a small (40S) and a large (60S) subunit. The 40S subunit contains about 33 different proteins and 1 molecule of RNA (18S). The 60S subunit contains about 49 different proteins and 3 molecules of RNA (25S, 5.8S and 5S).

Its subcellular location is the cytoplasm. In Saccharomyces cerevisiae (strain RM11-1a) (Baker's yeast), this protein is Small ribosomal subunit protein eS1A.